The primary structure comprises 511 residues: L-arabinose isomerase (511 aa).

Residues E316, E343, H360, and H459 each coordinate Mn(2+).

The protein belongs to the arabinose isomerase family. Requires Mn(2+) as cofactor.

It catalyses the reaction beta-L-arabinopyranose = L-ribulose. It functions in the pathway carbohydrate degradation; L-arabinose degradation via L-ribulose; D-xylulose 5-phosphate from L-arabinose (bacterial route): step 1/3. In terms of biological role, catalyzes the conversion of L-arabinose to L-ribulose. The protein is L-arabinose isomerase of Arthrobacter sp. (strain FB24).